Here is a 177-residue protein sequence, read N- to C-terminus: MRLPKEGDFITIQSYKHDGSLHRTWRDTMVLKTTENALIGVNDHTLVTENDGRRWVTREPAIVYFHKKYWFNIIAMIRETGVSYYCNLASPYILDPEALKYIDYDLDVKVFADGEKRLLDVDEYEQHKAQMNYPTDIDYILKENVKILVEWINENKGPFSSSYINIWYKRYLELKKR.

The active-site Proton donor is arginine 23. The Mg(2+) site is built by asparagine 87, aspartate 103, aspartate 105, aspartate 107, aspartate 120, and glutamate 123.

Belongs to the Ntdp family. Mg(2+) is required as a cofactor.

The catalysed reaction is a ribonucleoside 5'-triphosphate + H2O = a ribonucleoside 5'-diphosphate + phosphate + H(+). It carries out the reaction a ribonucleoside 5'-diphosphate + H2O = a ribonucleoside 5'-phosphate + phosphate + H(+). Its function is as follows. Has nucleoside phosphatase activity towards nucleoside triphosphates and nucleoside diphosphates. This is Nucleoside triphosphate/diphosphate phosphatase from Streptococcus agalactiae serotype Ia (strain ATCC 27591 / A909 / CDC SS700).